The following is an 876-amino-acid chain: Nitrogen regulatory protein areA (876 aa).

Positions 1-11 are enriched in gly residues; it reads MSGLTLGGGSG. Disordered stretches follow at residues 1-65, 137-159, 192-248, 393-413, 451-498, and 573-672; these read MSGL…PTDS, QERE…PGMS, IPFS…ESEF, FSPP…AYDG, YMYN…PNEF, and SADM…GPTT. Polar residues-rich tracts occupy residues 198-211, 399-408, and 455-480; these read DHPS…SEAT, GYQSTASTPQ, and QGGS…QSPG. Residues 602–611 are compositionally biased toward basic and acidic residues; sequence VRNRDQDPRR. Residues 615 to 640 are compositionally biased toward polar residues; that stretch reads ARTSSTPNTAQLLRQSMQNQSSHTSP. Residues 673-697 form a GATA-type zinc finger; that stretch reads CTNCFTQTTPLWRRNPEGQPLCNAC. The H-T-H motif DNA-binding region spans 721–742; that stretch reads NRNSANSLAVGSSRVSKKSARK. Composition is skewed to polar residues over residues 724–734 and 742–766; these read SANSLAVGSSR and KNSV…TSES. Residues 724 to 856 form a disordered region; the sequence is SANSLAVGSS…MPPAAVNPAN (133 aa). 2 stretches are compositionally biased toward low complexity: residues 782–798 and 828–855; these read PIAA…TTSP and SPSS…VNPA.

Interacts with nmrA.

The protein resides in the nucleus. Transcription activator that binds the consensus DNA element 5'-CGATAG-3' and mediates nitrogen metabolite repression. Activates the transcription of uapA. This chain is Nitrogen regulatory protein areA (areA), found in Emericella nidulans (strain FGSC A4 / ATCC 38163 / CBS 112.46 / NRRL 194 / M139) (Aspergillus nidulans).